Consider the following 375-residue polypeptide: MKKKVLIGLSGGVDSSVAALILLQQGYDVEAVFMRNWDSATNMDFRGNPTLYDETCEQEKDYQDALKVANKLGIKLHRVDFIHEYWDRVFSYFIDEYEKNRTPNPDVLCNNEIKFKAFIDYSEKFKPDYIAMGHYAQIDHTGDEPKLIRAVDSNKDQTYFLSQLKTEQLRNVLFPIGNLPKSEVRRIAKEHDLATADKKDSTGICFIGERHFNEFLLNYLPAKEGDMRRLDGTFIKRHFGLMNYTIGQRKGLGIGGTTDTTDAWFVVGKDLSTNTLYVEPGFEHPYLYSDEALITEVKWRGAKRDGKFTAKFRYRQEDQDVEIKWIDDETFKVFYPQKIRAVTPGQVCAIYEDEVCVGSGFISVVYNEGEKRLYS.

Residues 8 to 15 (GLSGGVDS) and methionine 34 each bind ATP. Residues 104–106 (NPD) form an interaction with target base in tRNA region. Cysteine 109 functions as the Nucleophile in the catalytic mechanism. Cysteines 109 and 205 form a disulfide. Glycine 133 is an ATP binding site. Positions 155-157 (KDQ) are interaction with tRNA. Cysteine 205 serves as the catalytic Cysteine persulfide intermediate. Residues 313–314 (RY) are interaction with tRNA.

It belongs to the MnmA/TRMU family.

Its subcellular location is the cytoplasm. It catalyses the reaction S-sulfanyl-L-cysteinyl-[protein] + uridine(34) in tRNA + AH2 + ATP = 2-thiouridine(34) in tRNA + L-cysteinyl-[protein] + A + AMP + diphosphate + H(+). Functionally, catalyzes the 2-thiolation of uridine at the wobble position (U34) of tRNA, leading to the formation of s(2)U34. The polypeptide is tRNA-specific 2-thiouridylase MnmA (Acholeplasma laidlawii (strain PG-8A)).